We begin with the raw amino-acid sequence, 240 residues long: Ribonuclease 3 (240 aa).

The region spanning Val-9–Gly-141 is the RNase III domain. Glu-54 serves as a coordination point for Mg(2+). The active site involves Asp-58. Positions 127 and 130 each coordinate Mg(2+). Glu-130 is an active-site residue. The 70-residue stretch at Asp-168 to Lys-237 folds into the DRBM domain.

Belongs to the ribonuclease III family. In terms of assembly, homodimer. Requires Mg(2+) as cofactor.

The protein resides in the cytoplasm. The enzyme catalyses Endonucleolytic cleavage to 5'-phosphomonoester.. Functionally, digests double-stranded RNA. Involved in the processing of primary rRNA transcript to yield the immediate precursors to the large and small rRNAs (23S and 16S). Processes some mRNAs, and tRNAs when they are encoded in the rRNA operon. Processes pre-crRNA and tracrRNA of type II CRISPR loci if present in the organism. The protein is Ribonuclease 3 of Thermotoga petrophila (strain ATCC BAA-488 / DSM 13995 / JCM 10881 / RKU-1).